Consider the following 269-residue polypeptide: uncharacterized protein (269 aa).

Positions methionine 1–histidine 12 are enriched in basic residues. The disordered stretch occupies residues methionine 1–valine 82. Over residues proline 21–leucine 33 the composition is skewed to acidic residues. Positions glutamate 34 to asparagine 63 are enriched in basic and acidic residues.

This is an uncharacterized protein from Dictyostelium discoideum (Social amoeba).